The primary structure comprises 346 residues: MNNLKWVAYFLKSRMNWIFWILFLNLLMLGISLIDYDFPIDSLFYIVSLNLSLTMIFLILTYFKEVKLYKHFDKDKEIEEIKHKDFAETPFQRHTVDYLYRQISAHKEKVVEQQLQLNMHEQTITEFVHDIKTPVTAMKLLIDQEKNQERKQALLYEWSRINSMLDTQLYITRLESQRKDMYFDYVSLKRMVIDEIQLTRHISQVKGIGFDVDFKVDDYVYTDIKWCRMIIRQILSNALKYSENFNIEIGTELNDQHVSLYIKDYGRGISKKDMPRIFERGFTSTANRNETTSSGMGLYLVNSVKDQLGIHLQVTSTVGKGTTVRLIFPLQNEIVERMSEVTNLSF.

Helical transmembrane passes span 15 to 35 (MNWIFWILFLNLLMLGISLID) and 43 to 63 (LFYIVSLNLSLTMIFLILTYF). Residues 126 to 332 (EFVHDIKTPV…TVRLIFPLQN (207 aa)) enclose the Histidine kinase domain.

As to quaternary structure, interacts with GraX.

Its subcellular location is the cell membrane. The enzyme catalyses ATP + protein L-histidine = ADP + protein N-phospho-L-histidine.. In terms of biological role, member of the two-component regulatory system GraR/GraS involved in resistance against cationic antimicrobial peptides (CAMPs). Functions as a sensor protein kinase which phosphorylates GraR through the auxiliary protein GraX. In turn, GraR up-regulates many genes such as adhesins, exoproteins, transporters, toxins, and proteins involved in cell wall synthesis. Down-regulates the expression of many genes involved in RNA and amino acid synthesis or glycolysis. The chain is Sensor protein kinase GraS (graS) from Staphylococcus aureus (strain bovine RF122 / ET3-1).